Reading from the N-terminus, the 540-residue chain is Sterol O-acyltransferase 1 (540 aa).

Residues 1-20 (MSLRNRLSKSGENPEQDEAQ) are disordered. Residues 1–128 (MSLRNRLSKS…LDELFEVDHI (128 aa)) lie on the Cytoplasmic side of the membrane. Position 2 is a phosphoserine (Ser-2). Cholesterol is bound at residue His-127. Residues 129–150 (RTIYHMFIALLILFVLSTIVVD) traverse the membrane as a helical segment. Residues 151-170 (YIDEGRLVLEFNLLAYAFGK) are Lumenal-facing. The chain crosses the membrane as a helical span at residues 171–196 (FPTVIWTWWAMFLSTLSIPYFLFQRW). The Cytoplasmic portion of the chain corresponds to 197-208 (AHGYSKSSHPLI). Residues 209 to 234 (YSLVHGLLFLVFQLGVLGFVPTYVVL) traverse the membrane as a helical segment. Residues 235–242 (AYTLPPAS) are Lumenal-facing. A helical transmembrane segment spans residues 243-266 (RFILILEQIRLIMKAHSFVRENIP). The Cytoplasmic portion of the chain corresponds to 267-309 (RVLNAAKEKSSKDPLPTVNQYLYFLFAPTLIYRDNYPRTPTVR). Residues 310–342 (WGYVAMQFLQVFGCLFYVYYIFERLCAPLFRNI) traverse the membrane as a helical segment. The Lumenal portion of the chain corresponds to 343–359 (KQEPFSARVLVLCVFNS). A helical membrane pass occupies residues 360-385 (ILPGVLILFLSFFAFLHCWLNAFAEM). Topologically, residues 386 to 433 (LRFGDRMFYKDWWNSTSYSNYYRTWNVVVHDWLYYYVYKDLLWFFSKR) are cytoplasmic. The FYXDWWN motif signature appears at 393 to 399 (FYKDWWN). Residues Asn-405, Arg-408, Asn-411, His-415, Tyr-423, Lys-435, and Ser-446 each coordinate an acyl-CoA. The chain crosses the membrane as a helical span at residues 434–458 (FKSAAMLAVFALSAVVHEYALAICL). His-450 is a catalytic residue. At 459 to 464 (SYFYPV) the chain is on the lumenal side. The chain crosses the membrane as a helical span at residues 465 to 480 (LFVLFMFFGMAFNFIV). At 481–486 (NDSRKR) the chain is on the cytoplasmic side. A helical transmembrane segment spans residues 487-518 (PIWNIMVWASLFLGYGLILCFYSQEWYARQHC). A disulfide bridge links Cys-518 with Cys-536. The Lumenal segment spans residues 519-540 (PLKNPTFLDYVRPRTWTCRYVF).

This sequence belongs to the membrane-bound acyltransferase family. Sterol o-acyltransferase subfamily. In terms of assembly, may form homo- or heterodimers. Interacts with UBIAD1.

The protein resides in the endoplasmic reticulum membrane. It catalyses the reaction a sterol + a long-chain fatty acyl-CoA = a long-chain 3-hydroxysterol ester + CoA. The enzyme catalyses cholesterol + an acyl-CoA = a cholesterol ester + CoA. The catalysed reaction is cholesterol + (9Z)-octadecenoyl-CoA = cholesteryl (9Z-octadecenoate) + CoA. It carries out the reaction cholesterol + hexadecanoyl-CoA = cholesteryl hexadecanoate + CoA. It catalyses the reaction octadecanoyl-CoA + cholesterol = cholesteryl octadecanoate + CoA. The enzyme catalyses (9Z,12Z)-octadecadienoyl-CoA + cholesterol = cholesteryl (9Z,12Z)-octadecadienoate + CoA. The catalysed reaction is (5Z,8Z,11Z,14Z)-eicosatetraenoyl-CoA + cholesterol = cholesteryl (5Z,8Z,11Z,14Z)-eicosatetraenoate + CoA. It carries out the reaction (9Z)-hexadecenoyl-CoA + cholesterol = cholesteryl (9Z)-hexadecenoate + CoA. It catalyses the reaction (11Z)-octadecenoyl-CoA + cholesterol = cholesteryl (11Z)-octadecenoate + CoA. The enzyme catalyses (7Z)-octadecenoyl-CoA + cholesterol = cholesteryl (7Z)-octadecenoate + CoA. Its function is as follows. Catalyzes the formation of fatty acid-cholesterol esters, which are less soluble in membranes than cholesterol. Plays a role in lipoprotein assembly and dietary cholesterol absorption. Preferentially utilizes oleoyl-CoA ((9Z)-octadecenoyl-CoA) as a substrate: shows a higher activity towards an acyl-CoA substrate with a double bond at the delta-9 position (9Z) than towards saturated acyl-CoA or an unsaturated acyl-CoA with a double bond at the delta-7 (7Z) or delta-11 (11Z) positions. This is Sterol O-acyltransferase 1 from Mus musculus (Mouse).